A 378-amino-acid polypeptide reads, in one-letter code: 3-hydroxyisobutyryl-CoA hydrolase 1 (378 aa).

Residue Ala2 is modified to N-acetylalanine. 4 residues coordinate substrate: Glu94, Gly119, Glu142, and Asp150.

This sequence belongs to the enoyl-CoA hydratase/isomerase family. As to expression, expressed in roots, leaves, flowers and siliques.

Its subcellular location is the peroxisome. It carries out the reaction 3-hydroxy-2-methylpropanoyl-CoA + H2O = 3-hydroxy-2-methylpropanoate + CoA + H(+). The protein operates within amino-acid degradation; L-valine degradation. With respect to regulation, inhibited by copper. Functionally, involved in valine catabolism. May be indirectly involved in benzoic acid biosynthesis and in cold signaling and cold tolerance. This chain is 3-hydroxyisobutyryl-CoA hydrolase 1 (CHY1), found in Arabidopsis thaliana (Mouse-ear cress).